A 449-amino-acid chain; its full sequence is UDP-N-acetylmuramoylalanine--D-glutamate ligase (449 aa).

G118–T124 serves as a coordination point for ATP.

The protein belongs to the MurCDEF family.

The protein resides in the cytoplasm. The catalysed reaction is UDP-N-acetyl-alpha-D-muramoyl-L-alanine + D-glutamate + ATP = UDP-N-acetyl-alpha-D-muramoyl-L-alanyl-D-glutamate + ADP + phosphate + H(+). It participates in cell wall biogenesis; peptidoglycan biosynthesis. Functionally, cell wall formation. Catalyzes the addition of glutamate to the nucleotide precursor UDP-N-acetylmuramoyl-L-alanine (UMA). The protein is UDP-N-acetylmuramoylalanine--D-glutamate ligase of Staphylococcus aureus (strain MSSA476).